The sequence spans 126 residues: Holo-[acyl-carrier-protein] synthase (126 aa).

2 residues coordinate Mg(2+): Asp9 and Glu58.

It belongs to the P-Pant transferase superfamily. AcpS family. Mg(2+) is required as a cofactor.

It localises to the cytoplasm. The enzyme catalyses apo-[ACP] + CoA = holo-[ACP] + adenosine 3',5'-bisphosphate + H(+). Functionally, transfers the 4'-phosphopantetheine moiety from coenzyme A to a Ser of acyl-carrier-protein. The chain is Holo-[acyl-carrier-protein] synthase from Citrobacter koseri (strain ATCC BAA-895 / CDC 4225-83 / SGSC4696).